A 60-amino-acid polypeptide reads, in one-letter code: Large ribosomal subunit protein uL30 (60 aa).

The protein belongs to the universal ribosomal protein uL30 family. Part of the 50S ribosomal subunit.

The polypeptide is Large ribosomal subunit protein uL30 (Symbiobacterium thermophilum (strain DSM 24528 / JCM 14929 / IAM 14863 / T)).